A 434-amino-acid polypeptide reads, in one-letter code: Enolase A (434 aa).

Residues H160 and E169 each contribute to the substrate site. Catalysis depends on E212, which acts as the Proton donor. Mg(2+) is bound by residues D247, E296, and D321. Substrate contacts are provided by E296 and D321. The Proton acceptor role is filled by K346. Substrate-binding positions include S373 to S376 and K397.

Belongs to the enolase family. In terms of assembly, homodimer. Requires Mg(2+) as cofactor.

Its subcellular location is the cytoplasm. The enzyme catalyses (2R)-2-phosphoglycerate = phosphoenolpyruvate + H2O. The protein operates within carbohydrate degradation; glycolysis; pyruvate from D-glyceraldehyde 3-phosphate: step 4/5. This chain is Enolase A (enoA), found in Dictyostelium discoideum (Social amoeba).